The primary structure comprises 103 residues: Floral defensin-like protein 1 (103 aa).

Positions 1–25 (MARSICFFAVAILALMLFAAYDAEA) are cleaved as a signal peptide. 5 disulfide bridges follow: Cys-28/Cys-72, Cys-32/Cys-48, Cys-39/Cys-59, Cys-45/Cys-66, and Cys-49/Cys-68. A propeptide spans 73–103 (VFEKTEATQTETFTKDVNTLAEALLEADMMV) (removed in mature form).

The protein belongs to the DEFL family. Post-translationally, when compared to other plant defensins, the petunia defensins have an additional fifth disulfide bond. In terms of tissue distribution, petals.

The protein resides in the secreted. It localises to the vacuole. Its function is as follows. Plant defense peptide with antifungal activity against F.oxysporum and B.cinerea. In Petunia hybrida (Petunia), this protein is Floral defensin-like protein 1 (D1).